The primary structure comprises 487 residues: NADH-quinone oxidoreductase subunit N (487 aa).

Helical transmembrane passes span 12-32, 40-60, 79-99, 104-124, 129-149, 164-184, 201-221, 248-268, 281-301, 310-330, 332-352, 378-398, 411-431, and 455-475; these read VLIL…LIGV, LTVT…IVLF, YMKI…VGFS, FDIF…MLMI, MLSL…LAAI, FVLG…LYGF, ILHL…AFKI, APKI…FIPL, ILIF…IGQT, SSIG…ILGV, GILI…AFIL, AIVM…AGFF, GLVP…FYYL, and LCLC…FWFS.

It belongs to the complex I subunit 2 family. As to quaternary structure, NDH-1 is composed of 14 different subunits. Subunits NuoA, H, J, K, L, M, N constitute the membrane sector of the complex.

It is found in the cell inner membrane. The enzyme catalyses a quinone + NADH + 5 H(+)(in) = a quinol + NAD(+) + 4 H(+)(out). NDH-1 shuttles electrons from NADH, via FMN and iron-sulfur (Fe-S) centers, to quinones in the respiratory chain. The immediate electron acceptor for the enzyme in this species is believed to be ubiquinone. Couples the redox reaction to proton translocation (for every two electrons transferred, four hydrogen ions are translocated across the cytoplasmic membrane), and thus conserves the redox energy in a proton gradient. This chain is NADH-quinone oxidoreductase subunit N, found in Bartonella bacilliformis (strain ATCC 35685 / KC583 / Herrer 020/F12,63).